We begin with the raw amino-acid sequence, 314 residues long: Ribosomal RNA small subunit methyltransferase H (314 aa).

Residues 36-38, aspartate 56, phenylalanine 82, aspartate 104, and glutamine 111 contribute to the S-adenosyl-L-methionine site; that span reads GGH.

The protein belongs to the methyltransferase superfamily. RsmH family.

The protein resides in the cytoplasm. It carries out the reaction cytidine(1402) in 16S rRNA + S-adenosyl-L-methionine = N(4)-methylcytidine(1402) in 16S rRNA + S-adenosyl-L-homocysteine + H(+). Functionally, specifically methylates the N4 position of cytidine in position 1402 (C1402) of 16S rRNA. This Ectopseudomonas mendocina (strain ymp) (Pseudomonas mendocina) protein is Ribosomal RNA small subunit methyltransferase H.